Reading from the N-terminus, the 165-residue chain is Cytochrome c-type biogenesis protein CcmE (165 aa).

Residues 1-7 (MTRKQRR) lie on the Cytoplasmic side of the membrane. The helical; Signal-anchor for type II membrane protein transmembrane segment at 8–28 (LMMIGGAGVVLVVAVGLVLNA) threads the bilayer. Topologically, residues 29–165 (MRGSIVFFST…ASADAMRPAR (137 aa)) are periplasmic. Heme is bound by residues His-122 and Tyr-126. A compositionally biased stretch (basic and acidic residues) spans 138 to 149 (QGHWKDDYEKKP). The tract at residues 138 to 165 (QGHWKDDYEKKPPGPGAAASADAMRPAR) is disordered. Residues 153 to 165 (GAAASADAMRPAR) show a composition bias toward low complexity.

Belongs to the CcmE/CycJ family.

It is found in the cell inner membrane. Its function is as follows. Heme chaperone required for the biogenesis of c-type cytochromes. Transiently binds heme delivered by CcmC and transfers the heme to apo-cytochromes in a process facilitated by CcmF and CcmH. The chain is Cytochrome c-type biogenesis protein CcmE from Rhodopseudomonas palustris (strain HaA2).